The following is a 387-amino-acid chain: Anhydro-N-acetylmuramic acid kinase (387 aa).

9–16 (GTSVDGID) contributes to the ATP binding site.

This sequence belongs to the anhydro-N-acetylmuramic acid kinase family.

It carries out the reaction 1,6-anhydro-N-acetyl-beta-muramate + ATP + H2O = N-acetyl-D-muramate 6-phosphate + ADP + H(+). The protein operates within amino-sugar metabolism; 1,6-anhydro-N-acetylmuramate degradation. It functions in the pathway cell wall biogenesis; peptidoglycan recycling. Functionally, catalyzes the specific phosphorylation of 1,6-anhydro-N-acetylmuramic acid (anhMurNAc) with the simultaneous cleavage of the 1,6-anhydro ring, generating MurNAc-6-P. Is required for the utilization of anhMurNAc either imported from the medium or derived from its own cell wall murein, and thus plays a role in cell wall recycling. The sequence is that of Anhydro-N-acetylmuramic acid kinase from Synechocystis sp. (strain ATCC 27184 / PCC 6803 / Kazusa).